The sequence spans 283 residues: ATP synthase gamma chain (283 aa).

This sequence belongs to the ATPase gamma chain family. As to quaternary structure, F-type ATPases have 2 components, CF(1) - the catalytic core - and CF(0) - the membrane proton channel. CF(1) has five subunits: alpha(3), beta(3), gamma(1), delta(1), epsilon(1). CF(0) has three main subunits: a, b and c.

The protein resides in the cell membrane. Functionally, produces ATP from ADP in the presence of a proton gradient across the membrane. The gamma chain is believed to be important in regulating ATPase activity and the flow of protons through the CF(0) complex. The chain is ATP synthase gamma chain from Clostridium botulinum (strain Eklund 17B / Type B).